The sequence spans 1370 residues: Insulin-like growth factor 1 receptor (1370 aa).

Positions 1–30 (MKSGSGGGSPTSLWGLVFLSAALSLWPTSG) are cleaved as a signal peptide. Cysteine 33 and cysteine 52 are joined by a disulfide. N-linked (GlcNAc...) asparagine glycans are attached at residues asparagine 51, asparagine 102, and asparagine 135. Disulfide bonds link cysteine 150–cysteine 178, cysteine 182–cysteine 205, cysteine 192–cysteine 211, cysteine 215–cysteine 224, cysteine 219–cysteine 230, cysteine 231–cysteine 239, cysteine 235–cysteine 248, cysteine 251–cysteine 260, cysteine 264–cysteine 276, cysteine 282–cysteine 303, cysteine 307–cysteine 321, cysteine 324–cysteine 328, and cysteine 332–cysteine 354. An N-linked (GlcNAc...) asparagine glycan is attached at asparagine 245. An N-linked (GlcNAc...) asparagine glycan is attached at asparagine 314. Asparagine 418 and asparagine 439 each carry an N-linked (GlcNAc...) asparagine glycan. Cysteine 456 and cysteine 489 are joined by a disulfide. 2 consecutive Fibronectin type-III domains span residues 490-610 (ESDV…TNAS) and 611-709 (VPSI…TEAE). N-linked (GlcNAc...) asparagine glycans are attached at residues asparagine 535, asparagine 608, asparagine 623, asparagine 641, asparagine 748, asparagine 757, asparagine 765, asparagine 901, and asparagine 914. Topologically, residues 742-936 (DVLQVANTTM…AKTTYENFMH (195 aa)) are extracellular. One can recognise a Fibronectin type-III 3 domain in the interval 835-928 (IPGPVTWEPR…DPVFFYVPAK (94 aa)). Residues 937–960 (LIIALPVAILLIVGGLVIMLYVFH) traverse the membrane as a helical segment. Over 961–1370 (RKRNNSRLGN…ALPLPQSSTC (410 aa)) the chain is Cytoplasmic. Residues 978-981 (NPEY) carry the IRS1- and SHC1-binding motif. The residue at position 981 (tyrosine 981) is a Phosphotyrosine. The region spanning 1000-1275 (ITMNRELGQG…SIKDEMEPSF (276 aa)) is the Protein kinase domain. Residues 1006–1014 (LGQGSFGMV) and lysine 1034 contribute to the ATP site. The active-site Proton acceptor is the aspartate 1136. Phosphotyrosine; by autocatalysis occurs at positions 1162, 1166, and 1167. Glycyl lysine isopeptide (Lys-Gly) (interchain with G-Cter in ubiquitin) cross-links involve residues lysine 1169 and lysine 1172. At serine 1279 the chain carries Phosphoserine; by GSK3-beta. A Phosphoserine modification is found at serine 1283. The tract at residues 1304 to 1370 (NMESVPLDPS…ALPLPQSSTC (67 aa)) is disordered. The segment covering 1305 to 1321 (MESVPLDPSASSASLPL) has biased composition (low complexity). Over residues 1322–1331 (PERHSGHKAE) the composition is skewed to basic and acidic residues.

This sequence belongs to the protein kinase superfamily. Tyr protein kinase family. Insulin receptor subfamily. In terms of assembly, tetramer of 2 alpha and 2 beta chains linked by disulfide bonds. The alpha chains contribute to the formation of the ligand-binding domain, while the beta chain carries the kinase domain. Interacts with PIK3R1 and with the PTB/PID domains of IRS1 and SHC1 in vitro when autophosphorylated on tyrosine residues. Forms a hybrid receptor with INSR, the hybrid is a tetramer consisting of 1 alpha chain and 1 beta chain of INSR and 1 alpha chain and 1 beta chain of IGF1R. Interacts with ARRB1 and ARRB2. Interacts with GRB10. Interacts with RACK1. Interacts with SOCS1, SOCS2 and SOCS3. Interacts with 14-3-3 proteins. Interacts with NMD2. Interacts with MAP3K5. Interacts with STAT3. Found in a ternary complex with IGF1 and ITGAV:ITGB3 or ITGA6:ITGB4. Interacts (nascent precursor form) with ZFAND2B. Autophosphorylated on tyrosine residues in response to ligand binding. Autophosphorylation occurs in trans, i.e. one subunit of the dimeric receptor phosphorylates tyrosine residues on the other subunit. Autophosphorylation occurs in a sequential manner; Tyr-1166 is predominantly phosphorylated first, followed by phosphorylation of Tyr-1162 and Tyr-1167. While every single phosphorylation increases kinase activity, all three tyrosine residues in the kinase activation loop (Tyr-1162, Tyr-1166 and Tyr-1167) have to be phosphorylated for optimal activity. Can be autophosphorylated at additional tyrosine residues (in vitro). Autophosphorylated is followed by phosphorylation of juxtamembrane tyrosines and C-terminal serines. May also be phosphorylated at Tyr-1162 and Tyr-1167 by mTORC2. Phosphorylation of Tyr-981 is required for IRS1- and SHC1-binding. Phosphorylation of Ser-1279 by GSK-3beta restrains kinase activity and promotes cell surface expression, it requires a priming phosphorylation at Ser-1283. Dephosphorylated by PTPN1. In terms of processing, polyubiquitinated at Lys-1169 and Lys-1172 through both 'Lys-48' and 'Lys-29' linkages, promoting receptor endocytosis and subsequent degradation by the proteasome. Ubiquitination is facilitated by pre-existing phosphorylation. Post-translationally, sumoylated with SUMO1. Controlled by regulated intramembrane proteolysis (RIP). Undergoes metalloprotease-dependent constitutive ectodomain shedding to produce a membrane-anchored 52 kDa C-Terminal fragment which is further processed by presenilin gamma-secretase to yield an intracellular 50 kDa fragment.

The protein localises to the cell membrane. It catalyses the reaction L-tyrosyl-[protein] + ATP = O-phospho-L-tyrosyl-[protein] + ADP + H(+). Its activity is regulated as follows. Activated by autophosphorylation at Tyr-1162, Tyr-1166 and Tyr-1167 on the kinase activation loop; phosphorylation at all three tyrosine residues is required for optimal kinase activity. Inhibited by MSC1609119A-1, BMS-754807, PQIP, benzimidazole pyridinone, isoquinolinedione, bis-azaindole, 3-cyanoquinoline, 2,4-bis-arylamino-1,3-pyrimidine, pyrrolopyrimidine, pyrrole-5-carboxaldehyde, picropodophyllin (PPP), tyrphostin derivatives. While most inhibitors bind to the ATP binding pocket, MSC1609119A-1 functions as allosteric inhibitor and binds close to the DFG motif and the activation loop. Dephosphorylated by PTPN1. Its function is as follows. Receptor tyrosine kinase which mediates actions of insulin-like growth factor 1 (IGF1). Binds IGF1 with high affinity and IGF2 and insulin (INS) with a lower affinity. The activated IGF1R is involved in cell growth and survival control. IGF1R is crucial for tumor transformation and survival of malignant cell. Ligand binding activates the receptor kinase, leading to receptor autophosphorylation, and tyrosines phosphorylation of multiple substrates, that function as signaling adapter proteins including, the insulin-receptor substrates (IRS1/2), Shc and 14-3-3 proteins. Phosphorylation of IRSs proteins lead to the activation of two main signaling pathways: the PI3K-AKT/PKB pathway and the Ras-MAPK pathway. The result of activating the MAPK pathway is increased cellular proliferation, whereas activating the PI3K pathway inhibits apoptosis and stimulates protein synthesis. Phosphorylated IRS1 can activate the 85 kDa regulatory subunit of PI3K (PIK3R1), leading to activation of several downstream substrates, including protein AKT/PKB. AKT phosphorylation, in turn, enhances protein synthesis through mTOR activation and triggers the antiapoptotic effects of IGFIR through phosphorylation and inactivation of BAD. In parallel to PI3K-driven signaling, recruitment of Grb2/SOS by phosphorylated IRS1 or Shc leads to recruitment of Ras and activation of the ras-MAPK pathway. In addition to these two main signaling pathways IGF1R signals also through the Janus kinase/signal transducer and activator of transcription pathway (JAK/STAT). Phosphorylation of JAK proteins can lead to phosphorylation/activation of signal transducers and activators of transcription (STAT) proteins. In particular activation of STAT3, may be essential for the transforming activity of IGF1R. The JAK/STAT pathway activates gene transcription and may be responsible for the transforming activity. JNK kinases can also be activated by the IGF1R. IGF1 exerts inhibiting activities on JNK activation via phosphorylation and inhibition of MAP3K5/ASK1, which is able to directly associate with the IGF1R. When present in a hybrid receptor with INSR, binds IGF1. In Rattus norvegicus (Rat), this protein is Insulin-like growth factor 1 receptor (Igf1r).